Reading from the N-terminus, the 130-residue chain is Small ribosomal subunit protein uS8 (130 aa).

It belongs to the universal ribosomal protein uS8 family. In terms of assembly, part of the 30S ribosomal subunit. Contacts proteins S5 and S12.

Functionally, one of the primary rRNA binding proteins, it binds directly to 16S rRNA central domain where it helps coordinate assembly of the platform of the 30S subunit. This chain is Small ribosomal subunit protein uS8, found in Shewanella baltica (strain OS223).